The sequence spans 191 residues: Elongation factor P-like protein (191 aa).

Belongs to the elongation factor P family.

This is Elongation factor P-like protein from Shewanella sediminis (strain HAW-EB3).